We begin with the raw amino-acid sequence, 374 residues long: Probable carboxylesterase 4, mitochondrial (374 aa).

Residues 1 to 52 (MLRRITCSSSLASPSLFLRFFRQLPRSYSSPTTIAVSGRNIRRLSTPTTLRC) constitute a mitochondrion transit peptide. The short motif at 135 to 137 (HGG) is the Involved in the stabilization of the negatively charged intermediate by the formation of the oxyanion hole element. Catalysis depends on residues Ser-219, Asp-317, and His-349.

The protein belongs to the 'GDXG' lipolytic enzyme family. In terms of tissue distribution, expressed in leaves, stems, flowers and siliques.

The protein resides in the mitochondrion. The catalysed reaction is a carboxylic ester + H2O = an alcohol + a carboxylate + H(+). Carboxylesterase acting on esters with varying acyl chain length. The protein is Probable carboxylesterase 4, mitochondrial (CXE4) of Arabidopsis thaliana (Mouse-ear cress).